Here is a 153-residue protein sequence, read N- to C-terminus: Transcriptional repressor NrdR (153 aa).

Residues 3 to 34 (CPYCGYEDSKVIDTRPADEGRTIKRRRECLKC) fold into a zinc finger. The ATP-cone domain maps to 49-139 (ILVIKKDNRR…VYRQFKDINT (91 aa)).

It belongs to the NrdR family. Zn(2+) is required as a cofactor.

Functionally, negatively regulates transcription of bacterial ribonucleotide reductase nrd genes and operons by binding to NrdR-boxes. The chain is Transcriptional repressor NrdR from Caldicellulosiruptor saccharolyticus (strain ATCC 43494 / DSM 8903 / Tp8T 6331).